Reading from the N-terminus, the 102-residue chain is UPF0235 protein msl4154 (102 aa).

The protein belongs to the UPF0235 family.

In Mesorhizobium japonicum (strain LMG 29417 / CECT 9101 / MAFF 303099) (Mesorhizobium loti (strain MAFF 303099)), this protein is UPF0235 protein msl4154.